A 979-amino-acid chain; its full sequence is Putative transcription initiation factor TFIID 111 kDa subunit (979 aa).

Ser-244 carries the phosphoserine modification.

TFIID is composed of TATA binding protein (TBP) and a number of TBP-associated factors (TAFs).

The protein resides in the nucleus. In terms of biological role, TAFs are components of the transcription factor IID (TFIID) complex that are essential for mediating regulation of RNA polymerase transcription. The polypeptide is Putative transcription initiation factor TFIID 111 kDa subunit (Schizosaccharomyces pombe (strain 972 / ATCC 24843) (Fission yeast)).